The chain runs to 189 residues: Large ribosomal subunit protein bL9 (189 aa).

The protein belongs to the bacterial ribosomal protein bL9 family.

Functionally, binds to the 23S rRNA. In Brucella ovis (strain ATCC 25840 / 63/290 / NCTC 10512), this protein is Large ribosomal subunit protein bL9.